The primary structure comprises 449 residues: MSRTWIRNPLAIFTANGLDAAGGLVVEDGRIVELLGAGQQPAQPCASQFDASRHVVLPGLVNTHHHFYQTLTRAWAPVVNQPLFPWLKTLYPVWARLTPEKLELATKVALAELLLSGCTTAADHHYLFPGGLEQAIDVQAGVVEELGMRAMLTRGSMSLGEKDGGLPPQQTVQEAETILADSERLIARYHQRGDGARVQIALAPCSPFSVTPEIMRASAEVAARHDVRLHTHLAETLDEEDFCLQRFGLRTVDYLDSVGWLGPRTWLAHGIHFNAEEIRRLGEAGTGICHCPSSNMRLASGICPTVELEAAGAPIGLGVDGSASNDASNMILEARQALYLQRLRYGAERITPELALGWATRGSARLLGRSDIGELAPGKQADLALFKLDELRFSGSHDPLSALLLCAADRADRVMVGGAWRVVDGAVEGLDLAALIARHRAAASALIAG.

Residues H64 and H66 each contribute to the Zn(2+) site. Q69 provides a ligand contact to substrate. H232 serves as a coordination point for Zn(2+). Substrate contacts are provided by E235 and H269. 2 residues coordinate Zn(2+): H269 and D320.

Belongs to the metallo-dependent hydrolases superfamily. ATZ/TRZ family. Homodimer. Zn(2+) serves as cofactor.

It carries out the reaction 8-oxoguanine + H2O + H(+) = urate + NH4(+). Its pathway is purine metabolism. Functionally, specifically deaminates 8-Oxoguanine (8-oxoG) to uric acid. 8-oxoG is formed via the oxidation of guanine within DNA by reactive oxygen species and leads, if uncorrected, to the incorporation of 8-oxoG:A mismatches and eventually to G:C to T:A transversions. This Pseudomonas aeruginosa (strain ATCC 15692 / DSM 22644 / CIP 104116 / JCM 14847 / LMG 12228 / 1C / PRS 101 / PAO1) protein is 8-oxoguanine deaminase.